The chain runs to 166 residues: Interferon gamma (166 aa).

Residues 1–23 form the signal peptide; it reads MKYTSYFLALLLCGLLGFSGSYG. The residue at position 24 (Gln24) is a Pyrrolidone carboxylic acid. Residues Asn39 and Asn106 are each glycosylated (N-linked (GlcNAc...) asparagine).

Belongs to the type II (or gamma) interferon family. In terms of assembly, homodimer. Interacts with IFNGR1 (via extracellular domain); this interaction promotes IFNGR1 dimerization. Released primarily from activated T lymphocytes.

It is found in the secreted. Its function is as follows. Type II interferon produced by immune cells such as T-cells and NK cells that plays crucial roles in antimicrobial, antiviral, and antitumor responses by activating effector immune cells and enhancing antigen presentation. Primarily signals through the JAK-STAT pathway after interaction with its receptor IFNGR1 to affect gene regulation. Upon IFNG binding, IFNGR1 intracellular domain opens out to allow association of downstream signaling components JAK2, JAK1 and STAT1, leading to STAT1 activation, nuclear translocation and transcription of IFNG-regulated genes. Many of the induced genes are transcription factors such as IRF1 that are able to further drive regulation of a next wave of transcription. Plays a role in class I antigen presentation pathway by inducing a replacement of catalytic proteasome subunits with immunoproteasome subunits. In turn, increases the quantity, quality, and repertoire of peptides for class I MHC loading. Increases the efficiency of peptide generation also by inducing the expression of activator PA28 that associates with the proteasome and alters its proteolytic cleavage preference. Up-regulates as well MHC II complexes on the cell surface by promoting expression of several key molecules such as cathepsins B/CTSB, H/CTSH, and L/CTSL. Participates in the regulation of hematopoietic stem cells during development and under homeostatic conditions by affecting their development, quiescence, and differentiation. This chain is Interferon gamma (IFNG), found in Bos taurus (Bovine).